The primary structure comprises 599 residues: Aspartate--tRNA(Asp/Asn) ligase (599 aa).

An L-aspartate-binding site is contributed by Glu-172. Positions 196–199 (QLFK) are aspartate. Arg-218 lines the L-aspartate pocket. ATP-binding positions include 218-220 (RDE) and Gln-227. His-451 provides a ligand contact to L-aspartate. Glu-485 serves as a coordination point for ATP. Arg-492 serves as a coordination point for L-aspartate. Position 537-540 (537-540 (GLDR)) interacts with ATP.

This sequence belongs to the class-II aminoacyl-tRNA synthetase family. Type 1 subfamily. As to quaternary structure, homodimer.

It localises to the cytoplasm. It catalyses the reaction tRNA(Asx) + L-aspartate + ATP = L-aspartyl-tRNA(Asx) + AMP + diphosphate. Aspartyl-tRNA synthetase with relaxed tRNA specificity since it is able to aspartylate not only its cognate tRNA(Asp) but also tRNA(Asn). Reaction proceeds in two steps: L-aspartate is first activated by ATP to form Asp-AMP and then transferred to the acceptor end of tRNA(Asp/Asn). This Aromatoleum aromaticum (strain DSM 19018 / LMG 30748 / EbN1) (Azoarcus sp. (strain EbN1)) protein is Aspartate--tRNA(Asp/Asn) ligase.